The following is a 420-amino-acid chain: 26S proteasome non-ATPase regulatory subunit 4 (420 aa).

The 174-residue stretch at 1–174 folds into the VWFA domain; sequence MSQEATIIAV…TGSHLISVAP (174 aa). UIM domains are found at residues 210 to 229, 255 to 274, and 288 to 307; these read AEDPDLLYALRVSMEDQRMR, SEEAMLQQALAMSMQMNNTE, and SEEDQIAYALRMSLQQMGEE. Residues 392–420 form a disordered region; it reads RKAINALTKSQSQRGSKKDEKEDEDKQNS. The segment covering 407-420 has biased composition (basic and acidic residues); that stretch reads SKKDEKEDEDKQNS.

This sequence belongs to the proteasome subunit S5A family. As to quaternary structure, the 26S proteasome is composed of a core protease, known as the 20S proteasome, capped at one or both ends by the 19S regulatory complex (RC). The RC is composed of at least 18 different subunits in two subcomplexes, the base and the lid, which form the portions proximal and distal to the 20S proteolytic core, respectively.

Functionally, binds and presumably selects ubiquitin-conjugates for destruction. The protein is 26S proteasome non-ATPase regulatory subunit 4 of Schistosoma mansoni (Blood fluke).